Reading from the N-terminus, the 699-residue chain is D-(-)-3-hydroxybutyrate oligomer hydrolase (699 aa).

Residues 1–19 form the signal peptide; sequence MNPSLCIAVAFACPLSALA. Ser303 serves as the catalytic Charge relay system.

This sequence belongs to the D-(-)-3-hydroxybutyrate oligomer hydrolase family.

The protein localises to the secreted. The enzyme catalyses (3R)-hydroxybutanoate dimer + H2O = 2 (R)-3-hydroxybutanoate + H(+). The protein operates within lipid metabolism; butanoate metabolism. In terms of biological role, participates in the degradation of poly-3-hydroxybutyrate (PHB). It works downstream of poly(3-hydroxybutyrate) depolymerase, hydrolyzing D(-)-3-hydroxybutyrate oligomers of various length (3HB-oligomers) into 3HB-monomers. In Azoarcus sp. (strain BH72), this protein is D-(-)-3-hydroxybutyrate oligomer hydrolase.